The following is a 59-amino-acid chain: Large ribosomal subunit protein bL32c (59 aa).

Residues 37-59 (SRSFSSGNEHPKPKGFSGQQANK) are disordered.

This sequence belongs to the bacterial ribosomal protein bL32 family.

Its subcellular location is the plastid. The protein localises to the chloroplast. The sequence is that of Large ribosomal subunit protein bL32c from Saccharum hybrid (Sugarcane).